Consider the following 193-residue polypeptide: Resuscitation-promoting factor Rpf1 (193 aa).

A signal peptide spans 1–35 (MGRHSTKTSSAFTKLAASTIAFGAAATIMAPSASA).

This sequence belongs to the transglycosylase family. Rpf subfamily.

It localises to the secreted. Factor that stimulates resuscitation of dormant cells. Has peptidoglycan (PG) hydrolytic activity. Active in the pM concentration range. Has little to no effect on actively-growing cells. PG fragments could either directly activate the resuscitation pathway of dormant bacteria or serve as a substrate for endogenous Rpf, resulting in low molecular weight products with resuscitation activity. The sequence is that of Resuscitation-promoting factor Rpf1 (rpf1) from Corynebacterium glutamicum (strain ATCC 13032 / DSM 20300 / JCM 1318 / BCRC 11384 / CCUG 27702 / LMG 3730 / NBRC 12168 / NCIMB 10025 / NRRL B-2784 / 534).